Consider the following 393-residue polypeptide: Potassium channel subfamily K member 4 (393 aa).

Over 1–3 (MRS) the chain is Cytoplasmic. The helical transmembrane segment at 4 to 24 (TTLLALLALVLLYLVSGALVF) threads the bilayer. Residues 25–87 (RALEQPHEQQ…NSTSNSSHSA (63 aa)) lie on the Extracellular side of the membrane. Asparagine 78 and asparagine 82 each carry an N-linked (GlcNAc...) asparagine glycan. The segment at residues 88 to 102 (WDLGSAFFFSGTIIT) is an intramembrane region (helical). K(+) contacts are provided by threonine 103, isoleucine 104, glycine 105, and tyrosine 106. Residues 103–108 (TIGYGN) are selectivity filter 1. Residues 103–109 (TIGYGNV) lie within the membrane without spanning it. Residues 110-117 (ALRTDAGR) lie on the Extracellular side of the membrane. The helical transmembrane segment at 118–150 (LFCIFYALVGIPLFGILLAGVGDRLGSSLRHGI) threads the bilayer. Residues 151–172 (GHIEAIFLKWHVPPELVRVLSA) are Cytoplasmic-facing. Residues 173 to 194 (MLFLLIGCLLFVLTPTFVFCYM) form a helical membrane-spanning segment. The Extracellular segment spans residues 195 to 199 (EDWSK). The helical intramembrane region spans 200–213 (LEAIYFVIVTLTTV). Residues threonine 212, valine 213, glycine 214, and phenylalanine 215 each coordinate K(+). Residues 212–217 (TVGFGD) are selectivity filter 2. An intramembrane segment occupies 214-219 (GFGDYV). Topologically, residues 220–233 (AGADPRQDSPAYQP) are extracellular. The helical transmembrane segment at 234–260 (LVWFWILLGLAYFASVLTTIGNWLRVV) threads the bilayer. The Cytoplasmic portion of the chain corresponds to 261-393 (SRRTRAEMGG…GRPRDKGVPV (133 aa)). A disordered region spans residues 285 to 393 (RVTQRAGPAA…GRPRDKGVPV (109 aa)). The segment covering 319-332 (SPSPPEKAQPPSPP) has biased composition (pro residues). Residues 365–384 (PRGRRRPNPPRKPVRPRGPG) show a composition bias toward basic residues.

The protein belongs to the two pore domain potassium channel (TC 1.A.1.8) family. Homodimer; disulfide-linked. Forms heterodimers with other 2-pore domain K(+) channel subunits, such as KCNK2 and KCNK10. Post-translationally, N-glycosylated.

It localises to the cell membrane. Its subcellular location is the cell projection. The protein resides in the axon. The enzyme catalyses K(+)(in) = K(+)(out). It carries out the reaction Rb(+)(in) = Rb(+)(out). The catalysed reaction is Cs(+)(in) = Cs(+)(out). Its activity is regulated as follows. Activated by mechanical stretch and arachidonic acid. In terms of biological role, k(+) channel that conducts voltage-dependent outward rectifying currents upon membrane depolarization. Voltage sensing is coupled to K(+) electrochemical gradient in an 'ion flux gating' mode where outward but not inward ion flow opens the gate. Converts to voltage-independent 'leak' conductance mode upon stimulation by various stimuli including mechanical membrane stretch, basic pH, heat and lipids. Homo- and heterodimerizes to form functional channels with distinct regulatory and gating properties. At trigeminal A-beta afferent nerves, the heterodimer of KCNK2/TREK-1 and KCNK4/TRAAK is mostly coexpressed at nodes of Ranvier where it conducts voltage-independent mechanosensitive and thermosensitive currents, allowing rapid action potential repolarization, high speed and high frequence saltatory conduction on myelinated nerves to ensure prompt sensory responses. Permeable to other monovalent cations such as Rb(+) and Cs(+). The protein is Potassium channel subfamily K member 4 of Homo sapiens (Human).